The primary structure comprises 191 residues: MAIPANFLRACHVCPLKKPAGCCKEQTMNIVDQQTFRDAMSCMGAAVNIITTDGPAGRAGFTASAVCSVTDTPPTLLVCLNRGASVWPVFNENRTLCVNTLSAGQEPLSNLFGGKTPMELRFAAARWQTGVTGCPQLEEALVSFDCRISQVVSVGTHDILFCAIEAIHRHATPYGLVWFDRSYHALMRPAC.

The protein belongs to the non-flavoprotein flavin reductase family. RutF subfamily.

It carries out the reaction FMNH2 + NAD(+) = FMN + NADH + 2 H(+). In terms of biological role, catalyzes the reduction of FMN to FMNH2 which is used to reduce pyrimidine by RutA via the Rut pathway. The polypeptide is FMN reductase (NADH) RutF (Escherichia coli O1:K1 / APEC).